Here is a 555-residue protein sequence, read N- to C-terminus: Methionine--tRNA ligase (555 aa).

Positions 13-23 (PYANGSLHIGH) match the 'HIGH' region motif. Residues Cys-144, Cys-147, Cys-157, and Cys-160 each coordinate Zn(2+). Positions 330–334 (KISKS) match the 'KMSKS' region motif. Lys-333 provides a ligand contact to ATP.

The protein belongs to the class-I aminoacyl-tRNA synthetase family. MetG type 1 subfamily. In terms of assembly, monomer. The cofactor is Zn(2+).

Its subcellular location is the cytoplasm. It carries out the reaction tRNA(Met) + L-methionine + ATP = L-methionyl-tRNA(Met) + AMP + diphosphate. Functionally, is required not only for elongation of protein synthesis but also for the initiation of all mRNA translation through initiator tRNA(fMet) aminoacylation. The polypeptide is Methionine--tRNA ligase (Blochmanniella pennsylvanica (strain BPEN)).